The chain runs to 460 residues: MATGKIIQVIGAVVDVEFPQDTVPKVYDALEVQNGEAKLVLEVQQQLGGGVVRCIAMGTSDGLSRGLSVTDLGHPIEVPVGKATLGRIMNVLGEPIDMKGDIGEEERWAIHRPAPSYEELSNSQELLETGIKVMDLICPFAKGGKVGLFGGAGVGKTVNMMELIRNIAIEHSGYSVFAGVGERTREGNDFYHEMTDSNVLDKVSLVYGQMNEPPGNRLRVALTGLTMAEKFRDEGRDVLLFVDNIYRYTLAGTEVSALLGRMPSAVGYQPTLAEEMGVLQERITSTKTGSITSVQAVYVPADDLTDPSPATTFAHLDATVVLSRQIASLGIYPAVDPLDSTSRQLDPLVVGQEHYNVARGVQSILQRYQELKDIIAILGMDELSEDDKLVVARARKIQRFLSQPFFVAEVFTGSPGKFVSLKDTIRGFKGILDGDYDHLPEQAFYMVGTIEEAVEKAKKL.

Residue 150–157 (GGAGVGKT) participates in ATP binding.

It belongs to the ATPase alpha/beta chains family. In terms of assembly, F-type ATPases have 2 components, CF(1) - the catalytic core - and CF(0) - the membrane proton channel. CF(1) has five subunits: alpha(3), beta(3), gamma(1), delta(1), epsilon(1). CF(0) has three main subunits: a(1), b(2) and c(9-12). The alpha and beta chains form an alternating ring which encloses part of the gamma chain. CF(1) is attached to CF(0) by a central stalk formed by the gamma and epsilon chains, while a peripheral stalk is formed by the delta and b chains.

It localises to the cell inner membrane. It carries out the reaction ATP + H2O + 4 H(+)(in) = ADP + phosphate + 5 H(+)(out). In terms of biological role, produces ATP from ADP in the presence of a proton gradient across the membrane. The catalytic sites are hosted primarily by the beta subunits. The protein is ATP synthase subunit beta of Photorhabdus laumondii subsp. laumondii (strain DSM 15139 / CIP 105565 / TT01) (Photorhabdus luminescens subsp. laumondii).